Consider the following 475-residue polypeptide: Lipoprotein lipase (475 aa).

The first 27 residues, 1–27 (MESKALLVLTLAVWLQSLTASRGGVAA), serve as a signal peptide directing secretion. The segment at 32–53 (RDFIDIESKFALRTPEDTAEDT) is interaction with GPIHBP1. Cysteines 54 and 67 form a disulfide. Residue N70 is glycosylated (N-linked (GlcNAc...) asparagine). Y121 is modified (3'-nitrotyrosine). The active-site Nucleophile is S159. D183 serves as the catalytic Charge relay system. Y191 bears the 3'-nitrotyrosine mark. Ca(2+) contacts are provided by A194, R197, S199, and D202. C243 and C266 are disulfide-bonded. Residues 243–266 (CNIGEAIRVIAERGLGDVDQLVKC) form an essential for determining substrate specificity region. The Charge relay system role is filled by H268. 2 cysteine pairs are disulfide-bonded: C291–C310 and C302–C305. In terms of domain architecture, PLAT spans 341–464 (FHYQVKIHFS…KGKAPAVFVK (124 aa)). 3'-nitrotyrosine is present on Y343. An N-linked (GlcNAc...) asparagine glycan is attached at N386. An important for interaction with lipoprotein particles region spans residues 417–421 (WSDWW). Residues 430 to 434 (KIRVK) form an important for heparin binding region. The tract at residues 443-467 (IFCSREKVSHLQKGKAPAVFVKCHD) is interaction with GPIHBP1. C445 and C465 are oxidised to a cystine.

It belongs to the AB hydrolase superfamily. Lipase family. Homodimer. Interacts with GPIHBP1 with 1:1 stoichiometry. Interacts with APOC2; the interaction activates LPL activity in the presence of lipids. Interaction with heparan sulfate proteoglycans is required to protect LPL against loss of activity. Associates with lipoprotein particles in blood plasma. Interacts with LMF1 and SEL1L; interaction with SEL1L is required to prevent aggregation of newly synthesized LPL in the endoplasmic reticulum (ER), and for normal export of LPL from the ER to the extracellular space. Interacts with SORL1; SORL1 acts as a sorting receptor, promoting LPL localization to endosomes and later to lysosomes, leading to degradation of newly synthesized LPL. Tyrosine nitration after lipopolysaccharide (LPS) challenge down-regulates the lipase activity. Detected in blood plasma. Detected in milk (at protein level).

It is found in the cell membrane. Its subcellular location is the secreted. It localises to the extracellular space. The protein resides in the extracellular matrix. It carries out the reaction a triacylglycerol + H2O = a diacylglycerol + a fatty acid + H(+). It catalyses the reaction a 1,2-diacyl-sn-glycero-3-phosphocholine + H2O = a 2-acyl-sn-glycero-3-phosphocholine + a fatty acid + H(+). The enzyme catalyses 1,2,3-tri-(9Z-octadecenoyl)-glycerol + H2O = di-(9Z)-octadecenoylglycerol + (9Z)-octadecenoate + H(+). The catalysed reaction is 1,2-di-(9Z-octadecenoyl)-sn-glycero-3-phosphocholine + H2O = (9Z-octadecenoyl)-sn-glycero-3-phosphocholine + (9Z)-octadecenoate + H(+). It carries out the reaction 1,2,3-tributanoylglycerol + H2O = dibutanoylglycerol + butanoate + H(+). It catalyses the reaction 1,2-dihexadecanoyl-sn-glycero-3-phosphocholine + H2O = hexadecanoyl-sn-glycero-3-phosphocholine + hexadecanoate + H(+). Its activity is regulated as follows. The apolipoprotein APOC2 acts as a coactivator of LPL activity. Ca(2+) binding promotes protein stability and formation of the active homodimer. Interaction with GPIHBP1 protects LPL against inactivation by ANGPTL4. Inhibited by NaCl. Its function is as follows. Key enzyme in triglyceride metabolism. Catalyzes the hydrolysis of triglycerides from circulating chylomicrons and very low density lipoproteins (VLDL), and thereby plays an important role in lipid clearance from the blood stream, lipid utilization and storage. Although it has both phospholipase and triglyceride lipase activities it is primarily a triglyceride lipase with low but detectable phospholipase activity. Mediates margination of triglyceride-rich lipoprotein particles in capillaries. Recruited to its site of action on the luminal surface of vascular endothelium by binding to GPIHBP1 and cell surface heparan sulfate proteoglycans. The protein is Lipoprotein lipase (LPL) of Homo sapiens (Human).